The chain runs to 1309 residues: MKPVRRGQTDTALDISSHAKTNGDFIKKMNTTDSKRLKLLEDLKGKLEVECKIRDGAETLLQVFDTNFKKETKERKEMLKKKCTDELESSKKKIEELVSSIESFQGENGEAKTGSTSLTRSASATVSRKSSLQEKYSTRFSYKAGCSDSCSVTVSGTGELIGPTRNAHSNLTPTVIQRIDFENVNEKNNSSSEDTQPNGKRPSSLQSNFSQFPLNPWLDNIYKACLEGSMKDVIDSSNNLCEYLHEHSDPAYAKNFSLITPTILSMLELNVSEVTASVYRLLRHLFLDATAFSCCQMLNLPWILSKSLLSGTDAYQIEREQAFRLIRTLYFLSSTEGHEDYLSGITRTIISICEHVSDVSRGIAVETLIELMIIRPKILFKANGLRVLMISLIDGSISENLAASAALALVYLLDDPESACYVNLPYDIGILLSPFTSSSSRDTFNSSEEQSEQAAKAMKSSAKVASVLLNSWSGLLALSTNDFQALRSIVDTLRVPSFAPRSDVIDLFFLIFQVEYSSWSESFLAGKRLTVVKNQAVSNDDNINMVNIPDGSNKKYMSLRQHFTAVLLFIFLELGLVESIVCMIRASDDPSASRKATYLLGEVLRLSDELLPIHLGAKIQSLPSLFNMASQFTAEDRFVATSVLQSIESLNRVKFHSATQPFSQTTSLLFKEQKTDGSFRGQRQVEHVKLKMGMQIDDSHFRSMLAETNVLATKNYQKWRWDTLVQIMEGPLLSPKRIDETLRTTKFMRRLLAFYKPFSNRFSSIQNTKPNQKFIKVGCLVFRTLLANPEGVKYLSESKVIKQIAESLSQIDGYSEQVSEPIFSNSRLQKTLTHGYFPMLKVLSSQKEGHAIMERWRIFTTLYHLTELRNRDDLIIIFLTNLDYRLEGHTRIIFSKALNTGQQAVRLTATKHLAALINSESANDNLNHWAISLLIFQLYDPCLEVCKTAVKVLNEVCARNENLLAQVVQLQPSLAHLGEIGSPLLLRFLATTVGFHYLSEINFIEHELDNWYHHRNIDYVDLLEQNFFLSFVSNLKIIDKKNNEPDENILPLHFYGELVKSPQGCEVLESSGHFESFMGTLVEFYDKPLGNEAIRQLKSALWAIGNIGKTDQGITFLINHDTIPLIVKYAENSLIPTVRGTAYFVLGLISRTSKGVEILESLHWYSLMSLMGTSQGICIPRHAGQVLSTPRRNVEFVNERVPTPEFSSLLSSLTNSEREVIRLVSNLSNHVLTNESARQLTKIRSKNAKVFSSKRLVKACMTILGKFHYRVQIQQFVFELFPYSVLLSSSTSQDLNESPSRPNNLSISA.

The 87-residue stretch at 24–110 (DFIKKMNTTD…IESFQGENGE (87 aa)) folds into the REM-1 domain. Positions 105–128 (QGENGEAKTGSTSLTRSASATVSR) are disordered. Residues 113 to 128 (TGSTSLTRSASATVSR) show a composition bias toward polar residues. Ser-151 carries the phosphoserine modification. The disordered stretch occupies residues 183-205 (NVNEKNNSSSEDTQPNGKRPSSL). Positions 194-205 (DTQPNGKRPSSL) are enriched in polar residues. Helical transmembrane passes span 285-305 (LFLD…WILS), 392-412 (LIDG…LVYL), 504-524 (VIDL…ESFL), 564-584 (TAVL…VCMI), 926-946 (LNHW…LEVC), and 984-1004 (LLLR…INFI). Thr-1203 carries the phosphothreonine modification.

The protein belongs to the RICTOR family. The target of rapamycin complex 2 (TORC2) is composed of at least bit61, pop3/wat1, sin1, ste20 and tor1. Either Ser-203 or Ser-204 are phosphorylated as well.

The protein resides in the membrane. Its function is as follows. Component of TORC2, which regulates multiple cellular processes to control cell growth in response to environmental signals. TORC2 is required for cell survival under various stress conditions. TORC2 positively controls G1 cell-cycle arrest, sexual development and amino acid uptake. Positively regulates amino acid uptake through the control of expression of amino acid permeases. The chain is Target of rapamycin complex 2 subunit ste20 from Schizosaccharomyces pombe (strain 972 / ATCC 24843) (Fission yeast).